Consider the following 462-residue polypeptide: Argininosuccinate lyase (462 aa).

This sequence belongs to the lyase 1 family. Argininosuccinate lyase subfamily.

The protein localises to the cytoplasm. The enzyme catalyses 2-(N(omega)-L-arginino)succinate = fumarate + L-arginine. It functions in the pathway amino-acid biosynthesis; L-arginine biosynthesis; L-arginine from L-ornithine and carbamoyl phosphate: step 3/3. In Bacillus cereus (strain ATCC 14579 / DSM 31 / CCUG 7414 / JCM 2152 / NBRC 15305 / NCIMB 9373 / NCTC 2599 / NRRL B-3711), this protein is Argininosuccinate lyase.